We begin with the raw amino-acid sequence, 66 residues long: Surface composition regulator (66 aa).

Belongs to the GlgS family.

Its function is as follows. Major determinant of cell surface composition. Negatively regulates motility, adhesion and synthesis of biofilm exopolysaccharides. The chain is Surface composition regulator from Escherichia coli O127:H6 (strain E2348/69 / EPEC).